Here is a 237-residue protein sequence, read N- to C-terminus: Uridylate kinase (237 aa).

12–15 (KLSG) is a binding site for ATP. The involved in allosteric activation by GTP stretch occupies residues 20 to 25 (GENGYG). G54 serves as a coordination point for UMP. Positions 55 and 59 each coordinate ATP. Residues D72 and 133-140 (TGNPYFST) contribute to the UMP site. ATP-binding residues include Y166 and D169.

Belongs to the UMP kinase family. In terms of assembly, homohexamer.

It localises to the cytoplasm. The enzyme catalyses UMP + ATP = UDP + ADP. Its pathway is pyrimidine metabolism; CTP biosynthesis via de novo pathway; UDP from UMP (UMPK route): step 1/1. Allosterically activated by GTP. Inhibited by UTP. Its function is as follows. Catalyzes the reversible phosphorylation of UMP to UDP. This chain is Uridylate kinase, found in Clostridium tetani (strain Massachusetts / E88).